Reading from the N-terminus, the 135-residue chain is Holo-[acyl-carrier-protein] synthase (135 aa).

Mg(2+)-binding residues include Asp-7 and Glu-57.

Belongs to the P-Pant transferase superfamily. AcpS family. Mg(2+) serves as cofactor.

It localises to the cytoplasm. It carries out the reaction apo-[ACP] + CoA = holo-[ACP] + adenosine 3',5'-bisphosphate + H(+). In terms of biological role, transfers the 4'-phosphopantetheine moiety from coenzyme A to a Ser of acyl-carrier-protein. The sequence is that of Holo-[acyl-carrier-protein] synthase from Corynebacterium glutamicum (strain ATCC 13032 / DSM 20300 / JCM 1318 / BCRC 11384 / CCUG 27702 / LMG 3730 / NBRC 12168 / NCIMB 10025 / NRRL B-2784 / 534).